A 338-amino-acid polypeptide reads, in one-letter code: Methionine import ATP-binding protein MetN (338 aa).

The ABC transporter domain maps to 2-241 (ISLDGIRKVF…PKEHITKEFV (240 aa)). 38 to 45 (GYSGAGKS) lines the ATP pocket.

This sequence belongs to the ABC transporter superfamily. Methionine importer (TC 3.A.1.24) family. In terms of assembly, the complex is composed of two ATP-binding proteins (MetN), two transmembrane proteins (MetI) and a solute-binding protein (MetQ).

Its subcellular location is the cell membrane. It catalyses the reaction L-methionine(out) + ATP + H2O = L-methionine(in) + ADP + phosphate + H(+). It carries out the reaction D-methionine(out) + ATP + H2O = D-methionine(in) + ADP + phosphate + H(+). In terms of biological role, part of the ABC transporter complex MetNIQ involved in methionine import. Responsible for energy coupling to the transport system. This chain is Methionine import ATP-binding protein MetN, found in Halalkalibacterium halodurans (strain ATCC BAA-125 / DSM 18197 / FERM 7344 / JCM 9153 / C-125) (Bacillus halodurans).